Consider the following 917-residue polypeptide: Protein FAN (917 aa).

Positions 176 to 247 (RLARTSFDKN…QDVRRIYKRR (72 aa)) constitute a GRAM domain. A BEACH-type PH domain is found at 189 to 286 (NISEKLHMEC…DRDDLYFYIA (98 aa)). The region spanning 290–575 (EHHVAEHTAE…QLFVTPHPRR (286 aa)) is the BEACH domain. 6 WD repeats span residues 628 to 658 (IHKE…KMFS), 670 to 700 (FSNM…YFYS), 712 to 740 (GHDD…KVWS), 761 to 791 (EHDV…NIWD), 803 to 833 (CHSG…NVID), and 884 to 914 (GHTG…IFWK).

As to expression, ubiquitous.

Couples the p55 TNF-receptor (TNF-R55 / TNFR1) to neutral sphingomyelinase (N-SMASE). Specifically binds to the N-smase activation domain of TNF-R55. May regulate ceramide production by N-SMASE. This is Protein FAN (NSMAF) from Homo sapiens (Human).